The chain runs to 399 residues: ATP phosphoribosyltransferase regulatory subunit (399 aa).

It belongs to the class-II aminoacyl-tRNA synthetase family. HisZ subfamily. In terms of assembly, heteromultimer composed of HisG and HisZ subunits.

It is found in the cytoplasm. Its pathway is amino-acid biosynthesis; L-histidine biosynthesis; L-histidine from 5-phospho-alpha-D-ribose 1-diphosphate: step 1/9. Its function is as follows. Required for the first step of histidine biosynthesis. May allow the feedback regulation of ATP phosphoribosyltransferase activity by histidine. The polypeptide is ATP phosphoribosyltransferase regulatory subunit (Symbiobacterium thermophilum (strain DSM 24528 / JCM 14929 / IAM 14863 / T)).